Here is a 167-residue protein sequence, read N- to C-terminus: 2-C-methyl-D-erythritol 2,4-cyclodiphosphate synthase (167 aa).

A divalent metal cation contacts are provided by Asp-10 and His-12. 4-CDP-2-C-methyl-D-erythritol 2-phosphate contacts are provided by residues 10 to 12 (DVH) and 36 to 37 (HS). His-44 provides a ligand contact to a divalent metal cation. 4-CDP-2-C-methyl-D-erythritol 2-phosphate contacts are provided by residues 58 to 60 (NIG), 63 to 67 (FPNTN), 134 to 137 (TTSE), Phe-141, and Arg-144.

The protein belongs to the IspF family. Homotrimer. A divalent metal cation serves as cofactor.

It catalyses the reaction 4-CDP-2-C-methyl-D-erythritol 2-phosphate = 2-C-methyl-D-erythritol 2,4-cyclic diphosphate + CMP. It participates in isoprenoid biosynthesis; isopentenyl diphosphate biosynthesis via DXP pathway; isopentenyl diphosphate from 1-deoxy-D-xylulose 5-phosphate: step 4/6. In terms of biological role, involved in the biosynthesis of isopentenyl diphosphate (IPP) and dimethylallyl diphosphate (DMAPP), two major building blocks of isoprenoid compounds. Catalyzes the conversion of 4-diphosphocytidyl-2-C-methyl-D-erythritol 2-phosphate (CDP-ME2P) to 2-C-methyl-D-erythritol 2,4-cyclodiphosphate (ME-CPP) with a corresponding release of cytidine 5-monophosphate (CMP). This is 2-C-methyl-D-erythritol 2,4-cyclodiphosphate synthase from Azobacteroides pseudotrichonymphae genomovar. CFP2.